We begin with the raw amino-acid sequence, 201 residues long: uncharacterized protein (201 aa).

The helical transmembrane segment at 11–31 threads the bilayer; the sequence is IIILTIMILTIIIFTRTINGL.

It is found in the membrane. This is an uncharacterized protein from Acanthamoeba polyphaga mimivirus (APMV).